The sequence spans 428 residues: Proteinase-activated receptor 1 (428 aa).

The first 21 residues, 1 to 21 (MGPQRLLLVAAGLSLCGPLLS), serve as a signal peptide directing secretion. The propeptide at 22-41 (SRVPVRQPESEMTDATVNPR) is removed for receptor activation. Residues 42-105 (SFFLRNPGEN…SGYLTSPWLR (64 aa)) are Extracellular-facing. Residues Asn65 and Asn78 are each glycosylated (N-linked (GlcNAc...) asparagine). Residues 106-131 (LFIPSVYTFVFVVSLPLNILAIAVFV) traverse the membrane as a helical segment. At 132–140 (LKMKVKKPA) the chain is on the cytoplasmic side. Residues 141–160 (VVYMLHLAMADVLFVSVLPL) form a helical membrane-spanning segment. Topologically, residues 161–179 (KISYYFSGSDWQFGSGMCR) are extracellular. A disulfide bridge connects residues Cys178 and Cys257. Residues 180-201 (FATAAFYCNMYASIMLMTVISI) traverse the membrane as a helical segment. The Cytoplasmic portion of the chain corresponds to 202–221 (DRFLAVVYPIQSLSWRTLGR). The chain crosses the membrane as a helical span at residues 222 to 242 (ANFTCLVIWVMAIMGVVPLLL). Topologically, residues 243 to 271 (KEQTTRVPGLNITTCHDVLNETLLQGFYS) are extracellular. Residues Asn253 and Asn262 are each glycosylated (N-linked (GlcNAc...) asparagine). The chain crosses the membrane as a helical span at residues 272-291 (YYFSAFSAVFFLVPLIISTI). Over 292–314 (CYMSIIRCLSSSSVANRSKKSRA) the chain is Cytoplasmic. The helical transmembrane segment at 315–337 (LFLSAAVFCVFIVCFGPTNVLLI) threads the bilayer. Residues 338–352 (MHYLLLSDSPATEKA) are Extracellular-facing. The chain crosses the membrane as a helical span at residues 353–377 (YFAYLLCVCVSSVSCCIDPLIYYYA). Topologically, residues 378–428 (SSECQRHLYGILCCKESSDPNSYNSTGQLMPSKMDTCSSHLNNSIYKKLLA) are cytoplasmic. Ser421 carries the phosphoserine modification.

This sequence belongs to the G-protein coupled receptor 1 family. Post-translationally, proteolytic cleavage by thrombin generates a new N-terminus that functions as a tethered ligand. Also proteolytically cleaved by cathepsin CTSG. Phosphorylated in the C-terminal tail; probably mediating desensitization prior to the uncoupling and internalization of the receptor.

The protein resides in the cell membrane. Its function is as follows. High affinity receptor that binds the activated thrombin, leading to calcium release from intracellular stores. The thrombin-activated receptor signaling pathway is mediated through PTX-insensitive G proteins, activation of phospholipase C resulting in the production of 1D-myo-inositol 1,4,5-trisphosphate (InsP3) which binds to InsP3 receptors causing calcium release from the stores. In astrocytes, the calcium released into the cytosol allows the Ca(2+)-dependent release of L-glutamate into the synaptic cleft through BEST1, that targets the neuronal postsynaptic GRIN2A/NMDAR receptor resulting in the synaptic plasticity regulation. May play a role in platelets activation and in vascular development. Mediates up-regulation of pro-inflammatory cytokines, such as MCP-1/CCL2 and IL6, triggered by coagulation factor Xa (F10) in cardiac fibroblasts and umbilical vein endothelial cells. In Cricetulus longicaudatus (Long-tailed dwarf hamster), this protein is Proteinase-activated receptor 1.